A 295-amino-acid polypeptide reads, in one-letter code: Acetylglutamate kinase (295 aa).

Substrate-binding positions include 66–67 (GG), arginine 88, and asparagine 193.

It belongs to the acetylglutamate kinase family. ArgB subfamily.

The protein localises to the cytoplasm. It carries out the reaction N-acetyl-L-glutamate + ATP = N-acetyl-L-glutamyl 5-phosphate + ADP. The protein operates within amino-acid biosynthesis; L-arginine biosynthesis; N(2)-acetyl-L-ornithine from L-glutamate: step 2/4. Its function is as follows. Catalyzes the ATP-dependent phosphorylation of N-acetyl-L-glutamate. The polypeptide is Acetylglutamate kinase (Sinorhizobium fredii (strain NBRC 101917 / NGR234)).